A 380-amino-acid chain; its full sequence is Cytochrome b (380 aa).

The next 4 helical transmembrane spans lie at Phe-33–Met-53, Trp-77–Ile-98, Trp-113–Leu-133, and Phe-178–Leu-198. Positions 83 and 97 each coordinate heme b. Heme b is bound by residues His-182 and His-196. Position 201 (His-201) interacts with a ubiquinone. Transmembrane regions (helical) follow at residues Tyr-226–Asn-246, Leu-288–His-308, Pro-320–Gly-340, and Phe-347–Pro-367.

It belongs to the cytochrome b family. In terms of assembly, the cytochrome bc1 complex contains 3 respiratory subunits (MT-CYB, CYC1 and UQCRFS1), 2 core proteins (UQCRC1 and UQCRC2) and probably 6 low-molecular weight proteins. The cofactor is heme b.

Its subcellular location is the mitochondrion inner membrane. Component of the ubiquinol-cytochrome c reductase complex (complex III or cytochrome b-c1 complex) that is part of the mitochondrial respiratory chain. The b-c1 complex mediates electron transfer from ubiquinol to cytochrome c. Contributes to the generation of a proton gradient across the mitochondrial membrane that is then used for ATP synthesis. The chain is Cytochrome b (mt-cyb) from Atractosteus spatula (Alligator gar).